The chain runs to 329 residues: MVKTQRVVITPGEPAGIGPDLVVQLAQREWPVELVVCADATLLTDRAAMLGLPLTLRPYSPNSPAQPQTAGTLTLLPVALRESVTAGQLAIENGHYVVETLARACDGCLNGEFAALITGPVHKGVINDAGIPFTGHTEFFEERSQAKKVVMMLATEELRVALATTHLPLRDIADAITPALLHEVIAILHHDLRTKFGIAEPRILVCGLNPHAGEGGHMGTEEIDTIIPVLDELRAQGMKLNGPLPADTLFQPKYLDNADAVLAMYHDQGLPVLKYQGFGRGVNITLGLPFIRTSVDHGTALELAGRGEADVGSFITALNLAIKMIVNTQ.

Substrate is bound by residues H136 and T137. Residues H166, H211, and H266 each coordinate a divalent metal cation. Substrate is bound by residues K274, N283, and R292.

Belongs to the PdxA family. In terms of assembly, homodimer. Zn(2+) serves as cofactor. It depends on Mg(2+) as a cofactor. Requires Co(2+) as cofactor.

Its subcellular location is the cytoplasm. The catalysed reaction is 4-(phosphooxy)-L-threonine + NAD(+) = 3-amino-2-oxopropyl phosphate + CO2 + NADH. It functions in the pathway cofactor biosynthesis; pyridoxine 5'-phosphate biosynthesis; pyridoxine 5'-phosphate from D-erythrose 4-phosphate: step 4/5. Catalyzes the NAD(P)-dependent oxidation of 4-(phosphooxy)-L-threonine (HTP) into 2-amino-3-oxo-4-(phosphooxy)butyric acid which spontaneously decarboxylates to form 3-amino-2-oxopropyl phosphate (AHAP). This chain is 4-hydroxythreonine-4-phosphate dehydrogenase, found in Shigella boydii serotype 18 (strain CDC 3083-94 / BS512).